The primary structure comprises 427 residues: Ribitol transporter (427 aa).

Topologically, residues 1–7 (MSVNNKQ) are cytoplasmic. Residues 8–28 (WYGLPLNLIWGYVAIAVFMTG) traverse the membrane as a helical segment. Over 29–51 (DGFELAFLSHYIKALGFTPAQAS) the chain is Extracellular. Residues 52-72 (FAFTLYGLAAALSAWVSGVVA) form a helical membrane-spanning segment. Over 73 to 79 (EIITPRK) the chain is Cytoplasmic. Residues 80 to 100 (AMLIGFVLWCVFHVLFLVFGL) traverse the membrane as a helical segment. The Extracellular segment spans residues 101 to 107 (GRANYAL). A helical membrane pass occupies residues 108 to 128 (ILLFYGIRGLAYPLFLYSFIV). The Cytoplasmic portion of the chain corresponds to 129-141 (AIIHNVRSDSSSS). A helical transmembrane segment spans residues 142–162 (ALGWFWAVYSVGIGVFGSYIP). Topologically, residues 163 to 171 (SFTIPHIGE) are extracellular. A helical membrane pass occupies residues 172 to 192 (MGTLWLALLFCATGGIIALVS). Residues 193-238 (MRHTETPRHMQNLTTREKFAELGRAATLLYTNRSILFSSIVRIINT) are Cytoplasmic-facing. A helical membrane pass occupies residues 239-259 (LSLFGFAVIMPMMFVDELGFT). Residues 260–263 (TSEW) are Extracellular-facing. A helical membrane pass occupies residues 264 to 284 (LQVWAAFFFTTIFSNVFWGIV). Topologically, residues 285–295 (AEKMGWMKVIR) are cytoplasmic. A helical membrane pass occupies residues 296–316 (WFGCIGMALSSLAFYYLPQHF). Residues 317-323 (GHNFAMA) lie on the Extracellular side of the membrane. The chain crosses the membrane as a helical span at residues 324–344 (LVPAIALGIFVAAFVPMAAVF). Residues 345-360 (PALEPNHKGAAISVYN) are Cytoplasmic-facing. A helical transmembrane segment spans residues 361-381 (LSAGLSNFLAPAIAVVLLPYF). Topologically, residues 382–383 (ST) are extracellular. Residues 384 to 404 (IGVVIAYTALYILAFFLCPLI) traverse the membrane as a helical segment. At 405–427 (RVEQPGFTSDQHAKPFTANAAES) the chain is on the cytoplasmic side.

This sequence belongs to the major facilitator superfamily. Sugar transporter (TC 2.A.1.1) family. CsbX subfamily.

It localises to the cell membrane. This is Ribitol transporter (rbtT) from Klebsiella pneumoniae.